Reading from the N-terminus, the 335-residue chain is Capsular polysaccharide phosphotransferase WcwK (335 aa).

Belongs to the stealth family.

This chain is Capsular polysaccharide phosphotransferase WcwK (wcwK), found in Streptococcus pneumoniae.